Here is a 179-residue protein sequence, read N- to C-terminus: Large ribosomal subunit protein uL5 (179 aa).

This sequence belongs to the universal ribosomal protein uL5 family. As to quaternary structure, part of the 50S ribosomal subunit; part of the 5S rRNA/L5/L18/L25 subcomplex. Contacts the 5S rRNA and the P site tRNA. Forms a bridge to the 30S subunit in the 70S ribosome.

Its function is as follows. This is one of the proteins that bind and probably mediate the attachment of the 5S RNA into the large ribosomal subunit, where it forms part of the central protuberance. In the 70S ribosome it contacts protein S13 of the 30S subunit (bridge B1b), connecting the 2 subunits; this bridge is implicated in subunit movement. Contacts the P site tRNA; the 5S rRNA and some of its associated proteins might help stabilize positioning of ribosome-bound tRNAs. This chain is Large ribosomal subunit protein uL5, found in Paramagnetospirillum magneticum (strain ATCC 700264 / AMB-1) (Magnetospirillum magneticum).